We begin with the raw amino-acid sequence, 331 residues long: Protein-methionine-sulfoxide reductase catalytic subunit MsrP (331 aa).

The segment at residues 1-57 (MLIKKTLRAALAGDDIPRSEITPRAVFEHRRRILQAAGAAAAGGLVGAHGLALAAYA) is a signal peptide (tat-type signal). Residues Asn90, 93–94 (YE), Cys148, Thr183, Asn231, Arg236, and 247–249 (SAK) contribute to the Mo-molybdopterin site.

This sequence belongs to the MsrP family. Heterodimer of a catalytic subunit (MsrP) and a heme-binding subunit (MsrQ). Mo-molybdopterin is required as a cofactor. Predicted to be exported by the Tat system. The position of the signal peptide cleavage has not been experimentally proven.

It is found in the periplasm. It catalyses the reaction L-methionyl-[protein] + a quinone + H2O = L-methionyl-(S)-S-oxide-[protein] + a quinol. It carries out the reaction L-methionyl-[protein] + a quinone + H2O = L-methionyl-(R)-S-oxide-[protein] + a quinol. Its function is as follows. Part of the MsrPQ system that repairs oxidized periplasmic proteins containing methionine sulfoxide residues (Met-O), using respiratory chain electrons. Thus protects these proteins from oxidative-stress damage caused by reactive species of oxygen and chlorine generated by the host defense mechanisms. MsrPQ is essential for the maintenance of envelope integrity under bleach stress, rescuing a wide series of structurally unrelated periplasmic proteins from methionine oxidation. The catalytic subunit MsrP is non-stereospecific, being able to reduce both (R-) and (S-) diastereoisomers of methionine sulfoxide. In Burkholderia mallei (strain ATCC 23344), this protein is Protein-methionine-sulfoxide reductase catalytic subunit MsrP.